A 508-amino-acid polypeptide reads, in one-letter code: Pyruvate kinase (508 aa).

Arg56 contributes to the substrate binding site. Asn58, Ser60, Asp90, and Thr91 together coordinate K(+). ATP is bound at residue 58 to 61 (NFSH). ATP-binding residues include Arg97 and Lys185. Residue Glu251 participates in Mg(2+) binding. 3 residues coordinate substrate: Gly274, Asp275, and Thr307. Asp275 contacts Mg(2+).

It belongs to the pyruvate kinase family. Homotetramer. Mg(2+) serves as cofactor. Requires K(+) as cofactor.

The catalysed reaction is pyruvate + ATP = phosphoenolpyruvate + ADP + H(+). Its pathway is carbohydrate degradation; glycolysis; pyruvate from D-glyceraldehyde 3-phosphate: step 5/5. With respect to regulation, regulated by phosphoenolpyruvate substrate and is allosterically activated by ribose-5-phosphate, AMP and other nucleoside monophosphates but not by fructose-1,6-bisphosphate. In Mycoplasma pneumoniae (strain ATCC 29342 / M129 / Subtype 1) (Mycoplasmoides pneumoniae), this protein is Pyruvate kinase (pyk).